The chain runs to 32 residues: Sodium channel neurotoxin BmK NT2 (32 aa).

Residues R2 to T32 enclose the LCN-type CS-alpha/beta domain.

As to expression, expressed by the venom gland.

The protein resides in the secreted. In terms of biological role, alpha toxins bind voltage-independently at site-3 of sodium channels (Nav) and inhibit the inactivation of the activated channels, thereby blocking neuronal transmission. This toxin dose-dependently delays inactivation of voltage-gated sodium channels (Nav) (EC(50)=0.91 uM), and shifts the steady-state activation and inactivation to hyperpolarized direction. In addition, it dose-dependently alters calcium dynamics and increases phosphorylation of MAP kinases 1/3 (MAPK1/MAPK3) and cAMP-response element binding (CREB) proteins in neocortical neurons. This effect is eliminated by tetrodotoxin, a Nav blocker. The protein is Sodium channel neurotoxin BmK NT2 of Olivierus martensii (Manchurian scorpion).